The sequence spans 112 residues: Protein lin-52 homolog (112 aa).

Belongs to the lin-52 family. Component of the DREAM complex.

This is Protein lin-52 homolog (lin52) from Tetraodon nigroviridis (Spotted green pufferfish).